The chain runs to 136 residues: Large ribosomal subunit protein uL16 (136 aa).

The protein belongs to the universal ribosomal protein uL16 family. In terms of assembly, part of the 50S ribosomal subunit.

Binds 23S rRNA and is also seen to make contacts with the A and possibly P site tRNAs. This is Large ribosomal subunit protein uL16 from Buchnera aphidicola subsp. Cinara cedri (strain Cc).